The following is a 421-amino-acid chain: Gamma-glutamyl phosphate reductase (421 aa).

Belongs to the gamma-glutamyl phosphate reductase family.

It is found in the cytoplasm. It carries out the reaction L-glutamate 5-semialdehyde + phosphate + NADP(+) = L-glutamyl 5-phosphate + NADPH + H(+). It participates in amino-acid biosynthesis; L-proline biosynthesis; L-glutamate 5-semialdehyde from L-glutamate: step 2/2. In terms of biological role, catalyzes the NADPH-dependent reduction of L-glutamate 5-phosphate into L-glutamate 5-semialdehyde and phosphate. The product spontaneously undergoes cyclization to form 1-pyrroline-5-carboxylate. The polypeptide is Gamma-glutamyl phosphate reductase (Acinetobacter baumannii (strain AYE)).